A 144-amino-acid polypeptide reads, in one-letter code: Maximins 3/H16 (144 aa).

A signal peptide spans 1-18 (MNFKYIVAVSFLIASAYA). 2 consecutive propeptides follow at residues 19–43 (RSVQ…REIR) and 73–122 (RTAE…KKEK). Position 143 is an isoleucine amide (isoleucine 143).

Belongs to the bombinin family. In terms of tissue distribution, expressed by the skin glands.

The protein resides in the secreted. Its function is as follows. Maximin-3 shows antibacterial activity against both Gram-positive and Gram-negative bacteria. It also shows antimicrobial activity against the fungus C.albicans, but not against A.flavus nor P.uticale. It has little hemolytic activity. It possess a significant cytotoxicity against tumor cell lines. It possess a significant anti-HIV activity. It shows high spermicidal activity. Maximin-H16 shows antimicrobial activity against bacteria and against the fungus C.albicans. Shows strong hemolytic activity. In Bombina maxima (Giant fire-bellied toad), this protein is Maximins 3/H16.